Reading from the N-terminus, the 435-residue chain is Gamma-glutamyl phosphate reductase (435 aa).

It belongs to the gamma-glutamyl phosphate reductase family.

The protein resides in the cytoplasm. The enzyme catalyses L-glutamate 5-semialdehyde + phosphate + NADP(+) = L-glutamyl 5-phosphate + NADPH + H(+). It participates in amino-acid biosynthesis; L-proline biosynthesis; L-glutamate 5-semialdehyde from L-glutamate: step 2/2. Catalyzes the NADPH-dependent reduction of L-glutamate 5-phosphate into L-glutamate 5-semialdehyde and phosphate. The product spontaneously undergoes cyclization to form 1-pyrroline-5-carboxylate. The sequence is that of Gamma-glutamyl phosphate reductase from Parasynechococcus marenigrum (strain WH8102).